A 711-amino-acid polypeptide reads, in one-letter code: Triacylglycerol hydrolase DDHD2 (711 aa).

The disordered stretch occupies residues Met-1–Ser-24. A WWE domain is found at Asp-30 to Arg-112. Ser-351 (nucleophile) is an active-site residue. One can recognise an SAM domain in the interval Gly-385 to Met-448. Ser-447 is modified (phosphoserine). 2 disordered regions span residues Gly-449–Cys-470 and Leu-609–Ser-638. In terms of domain architecture, DDHD spans Leu-495 to Gln-700. The span at Thr-614–Ser-624 shows a compositional bias: acidic residues.

This sequence belongs to the PA-PLA1 family. Forms homooligomers and, to a much smaller extent, heterooligomers with DDHD1. As to expression, widely expressed (at protein level).

Its subcellular location is the cytoplasm. The protein localises to the cytosol. The protein resides in the endoplasmic reticulum-Golgi intermediate compartment. It is found in the golgi apparatus. It localises to the cis-Golgi network. It catalyses the reaction a triacylglycerol + H2O = a diacylglycerol + a fatty acid + H(+). The catalysed reaction is a diacylglycerol + H2O = a monoacylglycerol + a fatty acid + H(+). It carries out the reaction a 1,3-diacylglycerol + H2O = a 1-acylglycerol + a fatty acid + H(+). The enzyme catalyses a 1-acylglycerol + H2O = glycerol + a fatty acid + H(+). It catalyses the reaction 1,2,3-tri-(9Z-octadecenoyl)-glycerol + H2O = di-(9Z)-octadecenoylglycerol + (9Z)-octadecenoate + H(+). The catalysed reaction is di-(9Z)-octadecenoylglycerol + H2O = (9Z-octadecenoyl)-glycerol + (9Z)-octadecenoate + H(+). It carries out the reaction 1,3-di-(9Z-octadecenoyl)-glycerol + H2O = 1-(9Z-octadecenoyl)-glycerol + (9Z)-octadecenoate + H(+). The enzyme catalyses trihexadecanoylglycerol + H2O = dihexadecanoylglycerol + hexadecanoate + H(+). It catalyses the reaction 1,2-di-(9Z-octadecenoyl)-sn-glycero-3-phosphocholine + H2O = (9Z-octadecenoyl)-sn-glycero-3-phosphocholine + (9Z)-octadecenoate + H(+). The catalysed reaction is 1-(9Z-octadecenoyl)-glycerol + H2O = glycerol + (9Z)-octadecenoate + H(+). It carries out the reaction 1,2-di-(9Z-octadecenoyl)-sn-glycero-3-phosphate + H2O = 2-(9Z-octadecenoyl)-sn-glycero-3-phosphate + (9Z)-octadecenoate + H(+). The enzyme catalyses 1-hexadecanoyl-2-(9Z-octadecenoyl)-sn-glycero-3-phosphate + H2O = 2-(9Z-octadecenoyl)-sn-glycero-3-phosphate + hexadecanoate + H(+). It catalyses the reaction 1-hexadecanoyl-2-(9Z-octadecenoyl)-sn-glycero-3-phosphoethanolamine + H2O = 2-(9Z-octadecenoyl)-sn-glycero-3-phosphoethanolamine + hexadecanoate + H(+). The catalysed reaction is 1-hexadecanoyl-2-(9Z-octadecenoyl)-sn-glycero-3-phospho-L-serine + H2O = 2-(9Z-octadecenoyl)-sn-glycero-3-phospho-L-serine + hexadecanoate + H(+). It carries out the reaction 1-hexadecanoyl-2-(9Z-octadecenoyl)-sn-glycero-3-phosphocholine + H2O = 2-(9Z-octadecenoyl)-sn-glycero-3-phosphocholine + hexadecanoate + H(+). Its function is as follows. Diacylglycerol (DAG) and triacylglycerol (TAG) lipase required for proper lipid homeostasis in the central nervous system. It cooperates with PNPLA2/ATGL in neuronal TAG catabolism and hydrolyzes sn-1,3 DAG downstream of PNPLA2/ATGL. In vitro, it also acts as a phospholipase that hydrolyzes preferentially phosphatidic acids, including 1,2-dioleoyl-sn-phosphatidic acid, phosphatidylcholine and phosphatidylethanolamine. Specifically binds to phosphatidylinositol 3-phosphate (PI(3)P), phosphatidylinositol 4-phosphate (PI(4)P), phosphatidylinositol 5-phosphate (PI(5)P) and possibly phosphatidylinositol 4,5-bisphosphate (PI(4,5)P2). May be involved in the maintenance of the endoplasmic reticulum and/or Golgi structures. May regulate the transport between Golgi apparatus and plasma membrane. The sequence is that of Triacylglycerol hydrolase DDHD2 from Homo sapiens (Human).